The sequence spans 481 residues: Cysteine protease atg-4.1 (481 aa).

Residue Cys112 is the Nucleophile of the active site. Residues Asp313 and His315 contribute to the active site. The interval 462–481 (DVHTEEEDADEDNDDDVANA) is disordered.

The protein belongs to the peptidase C54 family.

It localises to the cytoplasm. The enzyme catalyses [protein]-C-terminal L-amino acid-glycyl-phosphatidylethanolamide + H2O = [protein]-C-terminal L-amino acid-glycine + a 1,2-diacyl-sn-glycero-3-phosphoethanolamine. Its function is as follows. Cysteine protease required for autophagy. Cleaves the C-terminal amino acid of ATG8 family proteins lgg-1, to reveal a C-terminal glycine. Exposure of the glycine at the C-terminus is essential for ATG8 proteins conjugation to phosphatidylethanolamine (PE) and insertion to membranes, which is necessary for autophagy. Its cleavage activity is functionally redundant to atg-4.2, but it cleaves lgg-1 precursors more efficiently than atg-4.2. Acts redundantly with atg-4.2 to promote the lgg-1 delipidation to release the protein from membranes, which facilitates multiple events during macroautophagy. Unlike atg-4.2 does not seem to be required for autophagosome maturation. This Caenorhabditis elegans protein is Cysteine protease atg-4.1.